Reading from the N-terminus, the 231-residue chain is Large ribosomal subunit protein uL1 (231 aa).

This sequence belongs to the universal ribosomal protein uL1 family. Part of the 50S ribosomal subunit.

Binds directly to 23S rRNA. The L1 stalk is quite mobile in the ribosome, and is involved in E site tRNA release. Functionally, protein L1 is also a translational repressor protein, it controls the translation of the L11 operon by binding to its mRNA. This Acetivibrio thermocellus (strain ATCC 27405 / DSM 1237 / JCM 9322 / NBRC 103400 / NCIMB 10682 / NRRL B-4536 / VPI 7372) (Clostridium thermocellum) protein is Large ribosomal subunit protein uL1.